The primary structure comprises 315 residues: Probable NAD(P)H-dependent D-xylose reductase xyl1 (315 aa).

Residue Y50 is the Proton donor of the active site. H112 provides a ligand contact to substrate. Residues 166–167, 215–224, and 271–281 each bind NAD(+); these read SN, SSFGPLSFVE, and KSNDPTRLAQN.

It belongs to the aldo/keto reductase family.

It carries out the reaction xylitol + NAD(+) = D-xylose + NADH + H(+). The enzyme catalyses xylitol + NADP(+) = D-xylose + NADPH + H(+). It functions in the pathway carbohydrate metabolism; D-xylose degradation. In terms of biological role, catalyzes the initial reaction in the xylose utilization pathway by reducing D-xylose into xylitol. Xylose is a major component of hemicelluloses such as xylan. Most fungi utilize D-xylose via three enzymatic reactions, xylose reductase (XR), xylitol dehydrogenase (XDH), and xylulokinase, to form xylulose 5-phosphate, which enters pentose phosphate pathway. The protein is Probable NAD(P)H-dependent D-xylose reductase xyl1 (xyl1) of Aspergillus fumigatus (strain ATCC MYA-4609 / CBS 101355 / FGSC A1100 / Af293) (Neosartorya fumigata).